Here is a 365-residue protein sequence, read N- to C-terminus: Eukaryotic translation initiation factor 3 subunit H (365 aa).

Positions 11–160 constitute an MPN domain; it reads VKVEALVVMK…LRAFRLSPKF (150 aa).

The protein belongs to the eIF-3 subunit H family. In terms of assembly, component of the eukaryotic translation initiation factor 3 (eIF-3) complex.

The protein localises to the cytoplasm. Its function is as follows. Component of the eukaryotic translation initiation factor 3 (eIF-3) complex, which is involved in protein synthesis of a specialized repertoire of mRNAs and, together with other initiation factors, stimulates binding of mRNA and methionyl-tRNAi to the 40S ribosome. The eIF-3 complex specifically targets and initiates translation of a subset of mRNAs involved in cell proliferation. The sequence is that of Eukaryotic translation initiation factor 3 subunit H from Aspergillus terreus (strain NIH 2624 / FGSC A1156).